A 451-amino-acid polypeptide reads, in one-letter code: tRNA modification GTPase MnmE (451 aa).

Residues arginine 23, glutamate 80, and lysine 119 each contribute to the (6S)-5-formyl-5,6,7,8-tetrahydrofolate site. Residues 215–372 enclose the TrmE-type G domain; that stretch reads GIKVVLTGQP…LRTVLLKTVG (158 aa). Asparagine 225 lines the K(+) pocket. GTP-binding positions include 225–230, 244–250, and 269–272; these read NVGKSS, TEIPGTT, and DTAG. Serine 229 lines the Mg(2+) pocket. K(+) is bound by residues threonine 244, isoleucine 246, and threonine 249. Threonine 250 lines the Mg(2+) pocket. Lysine 451 contacts (6S)-5-formyl-5,6,7,8-tetrahydrofolate.

This sequence belongs to the TRAFAC class TrmE-Era-EngA-EngB-Septin-like GTPase superfamily. TrmE GTPase family. Homodimer. Heterotetramer of two MnmE and two MnmG subunits. K(+) is required as a cofactor.

The protein resides in the cytoplasm. Exhibits a very high intrinsic GTPase hydrolysis rate. Involved in the addition of a carboxymethylaminomethyl (cmnm) group at the wobble position (U34) of certain tRNAs, forming tRNA-cmnm(5)s(2)U34. The chain is tRNA modification GTPase MnmE from Nitrosomonas eutropha (strain DSM 101675 / C91 / Nm57).